Here is a 274-residue protein sequence, read N- to C-terminus: Oxidoreductase BOA17 (274 aa).

Leu14, Thr32, Asp57, Asn84, and Lys117 together coordinate NADP(+). Active-site proton donor residues include Ser135 and Tyr149. NADP(+) contacts are provided by Tyr149, Lys153, Ile182, and Thr184. The active-site Lowers pKa of active site Tyr is Lys153.

This sequence belongs to the short-chain dehydrogenases/reductases (SDR) family.

The protein operates within polyketide biosynthesis. Functionally, oxidoreductase; part of the gene cluster B that mediates the biosynthesis of botcinic acid and its botcinin derivatives, acetate-derived polyketides that contribute to virulence when combined with the sesquiterpene botrydial. Botcinic acid and its derivatives have been shown to induce chlorosis and necrosis during host plant infection, but also have antifungal activities. Two polyketide synthases, BOA6 and BOA9, are involved in the biosynthesis of botcinins. BOA6 mediates the formation of the per-methylated tetraketide core by condensation of four units of malonyl-CoA with one unit of acetyl-CoA, which would be methylated in activated methylene groups to yield a bicyclic acid intermediate that could then either be converted to botrylactone derivatives or lose the starter acetate unit through a retro-Claisen type C-C bond cleavage to yield botcinin derivatives. The second polyketide synthase, BOA9, is probably required for the biosynthesis of the tetraketide side chain of botcinins. The methyltransferase (MT) domain within BOA6 is probably responsible for the incorporation of four methyl groups. The trans-enoyl reductase BOA5 might take over the enoyl reductase function of BOA6 that misses an ER domain. The monooxygenases BOA2, BOA3 and BOA4 might be involved in further hydroxylations at C4, C5 and C8, whereas BOA7, close to BOA9, could potentially be involved in the hydroxylation at C4 in the side chain of botcinins. This is Oxidoreductase BOA17 from Botryotinia fuckeliana (strain B05.10) (Noble rot fungus).